The following is a 68-amino-acid chain: Small integral membrane protein 10-like protein 1 (68 aa).

Residues 1–21 (MAPAAAPSSLAVRASSPAATP) form a disordered region.

This chain is Small integral membrane protein 10-like protein 1, found in Homo sapiens (Human).